The primary structure comprises 246 residues: tRNA pseudouridine synthase A (246 aa).

Asp52 acts as the Nucleophile in catalysis. Substrate is bound at residue Tyr111.

It belongs to the tRNA pseudouridine synthase TruA family. As to quaternary structure, homodimer.

The enzyme catalyses uridine(38/39/40) in tRNA = pseudouridine(38/39/40) in tRNA. In terms of biological role, formation of pseudouridine at positions 38, 39 and 40 in the anticodon stem and loop of transfer RNAs. The sequence is that of tRNA pseudouridine synthase A from Rhodopseudomonas palustris (strain BisA53).